The primary structure comprises 106 residues: Neisseria hypothetical transcription factor (106 aa).

The HTH cro/C1-type domain occupies 26–80; the sequence is MRLFRVNKGWSQEELARQCGLDRTYVSAVERKRWNIALSNIEKMAAALGVAAYQL. Positions 37–56 form a DNA-binding region, H-T-H motif; that stretch reads QEELARQCGLDRTYVSAVER.

In terms of assembly, homodimer. Can interact with the dimeric form of the DNA mimic protein DMP19 with 1:1 stoichiometry.

Its subcellular location is the cytoplasm. Repressor activity is inhibited in the presence of the DNA mimic protein DMP19, which interacts with NHTF and prevents binding of NHTF to its DNA-binding sites. In terms of biological role, transcriptional regulator probably involved in the response to nitrogen levels. Down-regulates its own expression as well as the expression of the downstream gene, glnD, which encodes the [Protein-PII] uridylyltransferase, a key enzyme in the nitrogen regulation system. Acts by binding to a specific palindromic DNA sequence (5'-TGTNANTNACA-3') in its 5'-untranslated region. This is Neisseria hypothetical transcription factor from Neisseria meningitidis serogroup B (strain ATCC BAA-335 / MC58).